The following is a 386-amino-acid chain: Cysteine protease Amb a 11.0101 (386 aa).

An N-terminal signal peptide occupies residues 1 to 22; that stretch reads MEINKLVCFSFSLVLILGLVES. Positions 6 to 20 are T-cell epitope. MHC class II peptide able to activate CD(4+) T cells of the ragweed pollen-allergic patients indicated by significantly increased IL-2 production compared to non-allergic individuals. Not recognized by IgE of the patients allergic to ragweed pollen; that stretch reads LVCFSFSLVLILGLV. The propeptide at 23–108 is activation peptide; it reads FHYHERELES…SKISHFQALR (86 aa). N127 carries an N-linked (GlcNAc...) (complex) asparagine glycan. 3 disulfides stabilise this stretch: C152–C193, C186–C226, and C283–C334. The active site involves C155. The tract at residues 173–186 is B-cell epitope. Binds to IgE of the patients allergic to ragweed pollen; it reads GKLVKFSEQQLVDC. Catalysis depends on residues H289 and N310. The interval 340 to 377 is disordered; it reads SSFPIMNDPNPPKDDPNGPKDDPDAPKDPKFKTTQRLQ. Positions 350–370 are enriched in basic and acidic residues; sequence PPKDDPNGPKDDPDAPKDPKF. A propeptide spans 371-386 (removed in mature form); the sequence is KTTQRLQGIRTKLLEL.

It belongs to the peptidase C1 family. In terms of assembly, homodimer. In terms of processing, autocatalytic proteolytic cleavage of N-terminal activation peptide. N-glycosylated. Glycosylation is not required for binding to IgE. In terms of tissue distribution, expressed in pollen (at protein and mRNA level).

With respect to regulation, activated by L-cysteine. Inhibited by cysteine protease inhibitor E64 (L-trans-epoxysuccinyl-leucylamide-(4-guanido)-butane). Inhibited by cysteine/serine protease inhibitor leupeptin. Not inhibited by serine protease inhibitors 4-(2-aminoethyl)benzenesulfonyl fluoride hydrochloride (AEBSF) and phenylmethanesulfonyl fluoride (PMSF), metallo protease inhibitor bestatin or aspartic protease inhibitor pepstatin A. Its function is as follows. Cysteine protease. Hydrolyzes casein and synthetic peptide Boc-Val-Leu-Lys-7-amino-4-methylcoumarin (Boc-VLK-AMC) in vitro. The chain is Cysteine protease Amb a 11.0101 from Ambrosia artemisiifolia (Common ragweed).